Here is a 386-residue protein sequence, read N- to C-terminus: N-acetylneuraminate epimerase (386 aa).

Residues 1-29 (MGMQMKNFKKMMTLMALCFSVAITTSGYA) form the signal peptide. Kelch repeat units lie at residues 51 to 95 (VIYV…VFLN), 97 to 149 (ELYV…VKLN), 151 to 186 (TMVL…KVIY), 187 to 232 (NYFN…VMGN), 235 to 284 (LMLI…LAGA), 306 to 355 (QNYT…SYGD), and 357 to 386 (VFLI…LLIK). Glutamate 241 (proton acceptor) is an active-site residue.

Belongs to the NanM family. As to quaternary structure, homodimer.

The protein resides in the periplasm. The catalysed reaction is N-acetyl-alpha-neuraminate = N-acetyl-beta-neuraminate. In terms of biological role, converts alpha-N-acetylneuranimic acid (Neu5Ac) to the beta-anomer, accelerating the equilibrium between the alpha- and beta-anomers. Probably facilitates sialidase-negative bacteria to compete successfully for limited amounts of extracellular Neu5Ac, which is likely taken up in the beta-anomer. In addition, the rapid removal of sialic acid from solution might be advantageous to the bacterium to damp down host responses. In Salmonella typhimurium (strain LT2 / SGSC1412 / ATCC 700720), this protein is N-acetylneuraminate epimerase.